A 218-amino-acid polypeptide reads, in one-letter code: Small ribosomal subunit protein uS5 (218 aa).

Residues 1 to 10 (MTQATNQTPG) show a composition bias toward polar residues. Positions 1-63 (MTQATNQTPG…GRDERDSEWQ (63 aa)) are disordered. The segment covering 11 to 25 (QDVPGAADVPAAAEG) has biased composition (low complexity). Basic and acidic residues predominate over residues 31 to 63 (GERRGGGGGRGGDRRGRGDRRGRGRDERDSEWQ). One can recognise an S5 DRBM domain in the interval 62-125 (WQERVIQIRR…ADGKKHLVKV (64 aa)).

Belongs to the universal ribosomal protein uS5 family. Part of the 30S ribosomal subunit. Contacts proteins S4 and S8.

Its function is as follows. With S4 and S12 plays an important role in translational accuracy. In terms of biological role, located at the back of the 30S subunit body where it stabilizes the conformation of the head with respect to the body. The sequence is that of Small ribosomal subunit protein uS5 from Synechococcus sp. (strain RCC307).